Consider the following 841-residue polypeptide: ATP-dependent helicase Lhr-Core (841 aa).

The ATP site is built by Gln39, Lys62, Thr63, Asp181, Glu182, Ile352, Arg369, and His372. The 192-residue stretch at 43–234 folds into the Helicase ATP-binding domain; it reads IKEIHEGKNV…FLVGNGRDCY (192 aa). Positions 181-184 match the DEVH box motif; that stretch reads DEIH. A Helicase C-terminal domain is found at 266–416; that stretch reads RLYNLLKKLI…RIHIPKNCLD (151 aa). The segment at 417-500 is WH domain; it reads VLAQHLVGMA…IYYMNVGTIP (84 aa). The tract at residues 501 to 841 is domain 4; the sequence is DETAVDVIAD…MEFISMKGKK (341 aa).

Belongs to the Lhr helicase family. Lhr-Core subfamily. In terms of assembly, monomer.

It carries out the reaction Couples ATP hydrolysis with the unwinding of duplex DNA by translocating in the 3'-5' direction.. The enzyme catalyses ATP + H2O = ADP + phosphate + H(+). Its function is as follows. DNA helicase that loads on single-stranded (ss)DNA and translocates in a 3'-5' direction, probably involved in DNA repair. Archaeal orthologs have double-stranded (ds)DNA and/or RNA:DNA helicase activity. This chain is ATP-dependent helicase Lhr-Core, found in Methanocaldococcus jannaschii (strain ATCC 43067 / DSM 2661 / JAL-1 / JCM 10045 / NBRC 100440) (Methanococcus jannaschii).